A 486-amino-acid chain; its full sequence is Wax ester synthase/diacylglycerol acyltransferase 11 (486 aa).

Residues 1–192 (MGEDKKTARE…CNSGFFNKIW (192 aa)) lie on the Cytoplasmic side of the membrane. Catalysis depends on histidine 144, which acts as the Proton acceptor. The chain crosses the membrane as a helical span at residues 193–213 (WLFVGLWFILRLLFNTFVDIL). At 214–486 (MFALTIFVLR…LERGLYEIEV (273 aa)) the chain is on the extracellular side.

It in the N-terminal section; belongs to the long-chain O-acyltransferase family. In terms of tissue distribution, mostly expressed in inflorescences and flowers, especially at the periphery of petal epidermal cells.

The protein resides in the cell membrane. The protein localises to the endoplasmic reticulum membrane. The enzyme catalyses an acyl-CoA + a 1,2-diacyl-sn-glycerol = a triacyl-sn-glycerol + CoA. The catalysed reaction is a long chain fatty alcohol + a fatty acyl-CoA = a wax ester + CoA. Its pathway is glycerolipid metabolism; triacylglycerol biosynthesis. It participates in lipid metabolism. Bifunctional wax ester synthase/diacylglycerol acyltransferase. Involved in cuticular wax biosynthesis. Required for petals development, probably by mediating the production of fatty acids at the plasma membrane in the petal epidermis acting as lubricants that makes petal elongation smooth in narrow space between the sepals and the anthers inside floral buds. The sequence is that of Wax ester synthase/diacylglycerol acyltransferase 11 from Arabidopsis thaliana (Mouse-ear cress).